We begin with the raw amino-acid sequence, 226 residues long: GTP-binding nuclear protein Ran (226 aa).

Positions 3–184 constitute a Small GTPase Ran-type domain; that stretch reads DPISFKVILV…LSILRTLLND (182 aa). 14 to 21 lines the GTP pocket; it reads DGATGKTT. The switch-I stretch occupies residues 33–41; the sequence is KQYISTIGV. GTP-binding positions include Gly70, 135-138, and 163-165; these read NKCD and SAK. The switch-II stretch occupies residues 70-86; the sequence is GQEKFGGLRDGYYVDSD.

This sequence belongs to the small GTPase superfamily. Ran family. In terms of assembly, found in a nuclear export complex with RanGTP, exportin and pre-miRNA.

The protein resides in the nucleus. In terms of biological role, GTP-binding protein involved in nucleocytoplasmic transport. Required for the import of protein into the nucleus and also for RNA export. Involved in chromatin condensation and control of cell cycle. The protein is GTP-binding nuclear protein Ran of Giardia intestinalis (Giardia lamblia).